We begin with the raw amino-acid sequence, 241 residues long: Proteasome subunit beta type-1 (241 aa).

At methionine 1 the chain carries N-acetylmethionine. A propeptide spanning residues 1–28 (MLSSVAAYSGAGRDLAMEPHSSVGPLQL) is cleaved from the precursor. The O-linked (GlcNAc) serine glycan is linked to serine 58. Residues serine 62 and serine 68 each carry the phosphoserine modification. At tyrosine 150 the chain carries Phosphotyrosine. At serine 162 the chain carries Phosphoserine. Lysine 204 is subject to N6-acetyllysine. An O-linked (GlcNAc) serine glycan is attached at serine 209.

It belongs to the peptidase T1B family. In terms of assembly, the 26S proteasome consists of a 20S proteasome core and two 19S regulatory subunits. The 20S proteasome core is a barrel-shaped complex made of 28 subunits that are arranged in four stacked rings. The two outer rings are each formed by seven alpha subunits, and the two inner rings are formed by seven beta subunits. The proteolytic activity is exerted by three beta-subunits PSMB5, PSMB6 and PSMB7. Interacts with SERPINB2. Interacts with RFPL4A.

Its subcellular location is the cytoplasm. It localises to the nucleus. Non-catalytic component of the 20S core proteasome complex involved in the proteolytic degradation of most intracellular proteins. This complex plays numerous essential roles within the cell by associating with different regulatory particles. Associated with two 19S regulatory particles, forms the 26S proteasome and thus participates in the ATP-dependent degradation of ubiquitinated proteins. The 26S proteasome plays a key role in the maintenance of protein homeostasis by removing misfolded or damaged proteins that could impair cellular functions, and by removing proteins whose functions are no longer required. Associated with the PA200 or PA28, the 20S proteasome mediates ubiquitin-independent protein degradation. This type of proteolysis is required in several pathways including spermatogenesis (20S-PA200 complex) or generation of a subset of MHC class I-presented antigenic peptides (20S-PA28 complex). The sequence is that of Proteasome subunit beta type-1 (PSMB1) from Bos taurus (Bovine).